Reading from the N-terminus, the 379-residue chain is LIM/homeobox protein Lhx9 (379 aa).

LIM zinc-binding domains lie at 51-112 and 113-175; these read TLCA…RFSV and QRCA…LVQG. 2 disordered regions span residues 232–257 and 310–379; these read ENDTDLDRDQSYPPSQKTKRMRTSFK and RQEN…TNLF. Basic residues predominate over residues 248–257; the sequence is KTKRMRTSFK. The homeobox DNA-binding region spans 249 to 308; sequence TKRMRTSFKHHQLRTTKSYFAINHNPDAKDLKQLAQKTGLTKRVLQVWFQNARAKFRRNL. Residues 326–379 are compositionally biased toward polar residues; that stretch reads APASTDSAALTPTGAASTLSDLTSPSLNVGASVTPNMDSHESGSPSQTTLTNLF.

As to expression, isoform 1 and isoform 3 are expressed in ovary, testis, brain and heart. Isoform 4 and isoform 5 are expressed in brain.

It is found in the nucleus. Functionally, may be involved in gonadal development. The chain is LIM/homeobox protein Lhx9 (lhx9) from Glandirana rugosa (Japanese wrinkled frog).